The following is a 449-amino-acid chain: 3-phosphoshikimate 1-carboxyvinyltransferase (449 aa).

The interval 1–26 is disordered; sequence MNHHLPSRPARSRQSQGLKGNLRVPG. 3-phosphoshikimate contacts are provided by Lys28, Ser29, and Arg33. Residue Lys28 coordinates phosphoenolpyruvate. Phosphoenolpyruvate contacts are provided by Gly100 and Arg128. Residues Ser174, Gln176, Asp327, and Lys354 each contribute to the 3-phosphoshikimate site. Gln176 provides a ligand contact to phosphoenolpyruvate. Residue Asp327 is the Proton acceptor of the active site. 2 residues coordinate phosphoenolpyruvate: Arg358 and Arg403.

It belongs to the EPSP synthase family. In terms of assembly, monomer.

The protein resides in the cytoplasm. It carries out the reaction 3-phosphoshikimate + phosphoenolpyruvate = 5-O-(1-carboxyvinyl)-3-phosphoshikimate + phosphate. It participates in metabolic intermediate biosynthesis; chorismate biosynthesis; chorismate from D-erythrose 4-phosphate and phosphoenolpyruvate: step 6/7. Functionally, catalyzes the transfer of the enolpyruvyl moiety of phosphoenolpyruvate (PEP) to the 5-hydroxyl of shikimate-3-phosphate (S3P) to produce enolpyruvyl shikimate-3-phosphate and inorganic phosphate. This Chelativorans sp. (strain BNC1) protein is 3-phosphoshikimate 1-carboxyvinyltransferase.